A 705-amino-acid chain; its full sequence is MGQEKHVFSIDWAGRKLTVETGQLAKQANGAVMVRYGDTAVLSTATASKEPKTVDFFPLTVNYEERLYAVGKIPGGFIKREGRPSEKAILASRLIDRPIRPLFADGFRNEVQVVSIVMSVDQDCSSEMAAMFGSSLALCVSDIPFEGPIAGVTVGRVDNKFIINPTLEQLEKSDIHLVVAGTKDAINMVEAGADEVPEEIMLEAIMFGHEEIKRLIAFQEEIVAAVGKEKSEITLYEIDSDLKEKVRGMAESNLLKAIQVHEKHAREDAISEVKNEVLAKFEEEEHDEETLKQVKDILSQLVKNEVRRLITEEKVRPDGRAVDEIRPLSSEVGLLPRTHGSGLFTRGQTQALSICTLGALGDVQILDGLGVEESKRFMHHYNFPQFSVGETGPMRGPGRREIGHGALGERALEPIVPSEKDFPYTIRLVSEVLESNGSTSQASICASTLAMMDAGVPIKAPVAGIAMGLVKSGDNYTVLTDIQGMEDHLGDMDFKVAGTSKGVTALQMDIKIEGLSREILEEALQQAKKGRMEILESMLSTLAESRKELSPYAPKILTMSINPDKIRDVIGPSGKQINKIIEDTGVKIDIEQDGTIFISSTDESMNQKAKKIIEDLVREVEVGQLYLGKVKRIEKFGAFVELFSGKDGLVHISELALERVGKVEDVVKIGDELLVKVTEIDKQGRVNLSRKAVLREQKEKEEQKS.

Mg(2+) contacts are provided by Asp487 and Asp493. The KH domain occupies 554-613 (PKILTMSINPDKIRDVIGPSGKQINKIIEDTGVKIDIEQDGTIFISSTDESMNQKAKKII). Residues 623-691 (GQLYLGKVKR…KQGRVNLSRK (69 aa)) form the S1 motif domain.

The protein belongs to the polyribonucleotide nucleotidyltransferase family. Requires Mg(2+) as cofactor.

It localises to the cytoplasm. It catalyses the reaction RNA(n+1) + phosphate = RNA(n) + a ribonucleoside 5'-diphosphate. Its function is as follows. Involved in mRNA degradation. Catalyzes the phosphorolysis of single-stranded polyribonucleotides processively in the 3'- to 5'-direction. This is Polyribonucleotide nucleotidyltransferase from Bacillus licheniformis (strain ATCC 14580 / DSM 13 / JCM 2505 / CCUG 7422 / NBRC 12200 / NCIMB 9375 / NCTC 10341 / NRRL NRS-1264 / Gibson 46).